Consider the following 94-residue polypeptide: Late cornified envelope-like proline-rich protein 1 (94 aa).

Disordered stretches follow at residues 1 to 26 and 47 to 94; these read MSSD…CEQK and CPRE…PPPE. Residues 53–94 are compositionally biased toward pro residues; that stretch reads PAPPKCPPCPSPSPSSCPPKPCAKPCPPKCPSSCPPPCPPPE.

It belongs to the cornifin (SPRR) family.

This is Late cornified envelope-like proline-rich protein 1 (LELP1) from Macaca fascicularis (Crab-eating macaque).